Here is a 171-residue protein sequence, read N- to C-terminus: Crossover junction endodeoxyribonuclease RuvC (171 aa).

Active-site residues include aspartate 7, glutamate 66, and aspartate 138. Positions 7, 66, and 138 each coordinate Mg(2+).

This sequence belongs to the RuvC family. As to quaternary structure, homodimer which binds Holliday junction (HJ) DNA. The HJ becomes 2-fold symmetrical on binding to RuvC with unstacked arms; it has a different conformation from HJ DNA in complex with RuvA. In the full resolvosome a probable DNA-RuvA(4)-RuvB(12)-RuvC(2) complex forms which resolves the HJ. Mg(2+) is required as a cofactor.

The protein resides in the cytoplasm. The enzyme catalyses Endonucleolytic cleavage at a junction such as a reciprocal single-stranded crossover between two homologous DNA duplexes (Holliday junction).. Its function is as follows. The RuvA-RuvB-RuvC complex processes Holliday junction (HJ) DNA during genetic recombination and DNA repair. Endonuclease that resolves HJ intermediates. Cleaves cruciform DNA by making single-stranded nicks across the HJ at symmetrical positions within the homologous arms, yielding a 5'-phosphate and a 3'-hydroxyl group; requires a central core of homology in the junction. The consensus cleavage sequence is 5'-(A/T)TT(C/G)-3'. Cleavage occurs on the 3'-side of the TT dinucleotide at the point of strand exchange. HJ branch migration catalyzed by RuvA-RuvB allows RuvC to scan DNA until it finds its consensus sequence, where it cleaves and resolves the cruciform DNA. The chain is Crossover junction endodeoxyribonuclease RuvC from Thiobacillus denitrificans (strain ATCC 25259 / T1).